The sequence spans 349 residues: Isopentenyl-diphosphate delta-isomerase (349 aa).

6 to 7 serves as a coordination point for substrate; the sequence is RK. Residues 62–64, Ser93, and Asn122 each bind FMN; that span reads AMT. Position 152 (Gln152) interacts with substrate. Glu153 is a binding site for Mg(2+). Residues Lys184, Thr214, 258–259, and 280–281 contribute to the FMN site; these read GG and AG.

This sequence belongs to the IPP isomerase type 2 family. As to quaternary structure, homooctamer. Dimer of tetramers. The cofactor is FMN. NADPH is required as a cofactor. Mg(2+) serves as cofactor.

Its subcellular location is the cytoplasm. The enzyme catalyses isopentenyl diphosphate = dimethylallyl diphosphate. In terms of biological role, involved in the biosynthesis of isoprenoids. Catalyzes the 1,3-allylic rearrangement of the homoallylic substrate isopentenyl (IPP) to its allylic isomer, dimethylallyl diphosphate (DMAPP). The sequence is that of Isopentenyl-diphosphate delta-isomerase from Bacillus cereus (strain ATCC 10987 / NRS 248).